The following is a 224-amino-acid chain: Cerebellin-2 (224 aa).

Positions 1–51 (MPAPGQGPRGPLLSMPGRRGALREPADFGSSLGAVLALLLLLLPACCPVRA) are cleaved as a signal peptide. N-linked (GlcNAc...) asparagine glycans are attached at residues Asn-53 and Asn-110. The C1q domain maps to 88-224 (SGSAKVAFSA…TFSGFLVFPL (137 aa)).

In terms of assembly, homohexamer; disulfide-linked homotrimers. The trimers are assembled via the globular C1q domains. The trimers associate via N-terminal cysteine residues to form disulfide-linked hexamers. May form homooligomers or heterooligomers with CBLN1 and CBLN3 prior to secretion. Once secreted, does not interact with other CBLN family members. Interacts with GRID2, and more weakly with GRID1. Interacts with NRXN1 and NRXN2 long and short isoforms produced by alternative promoter usage. Weakly interacts with NRXN3 short isoform and not at all with NRXN3 long isoform. Expressed in various brain regions with higher levels in the olfactory bulb, cerebral cortex, certain thalamic and hypothalamic nuclei, superior and inferior colliculi and some brainstem nuclei. Highly expressed in the dorsal medial habenula.

It localises to the secreted. Its function is as follows. Acts as a synaptic organizer in specific subsets of neurons in the brain. Essential for long-term maintenance but not establishment of excitatory synapses. Functions as part of a trans-synaptic complex by binding to postsynaptic GRID1 and presynaptic neurexins. This interaction helps regulate the activity of NMDA and AMPA receptors at hippocampal synapses without affecting synapse formation. NRXN1B-CBLN2-GRID1 complex transduce presynaptic signals into postsynaptic NMDAR response. NRXN3B-CBLN2-GRID1 complex transduce presynaptic signals into postsynaptic AMPAR response. The chain is Cerebellin-2 (Cbln2) from Mus musculus (Mouse).